The chain runs to 277 residues: Serine protease 33 (277 aa).

A signal peptide spans 1–24 (MRGASHLQILLLLVLGTRMQECAA). Positions 34–276 (IVGGRDAQDG…YSPWIQARLS (243 aa)) constitute a Peptidase S1 domain. An intrachain disulfide couples Cys59 to Cys75. Residues His74 and Asp123 each act as charge relay system in the active site. Intrachain disulfides connect Cys157–Cys234, Cys190–Cys213, and Cys224–Cys252. The Charge relay system role is filled by Ser228.

Belongs to the peptidase S1 family. Post-translationally, not glycosylated. As to expression, widely expressed.

The protein localises to the secreted. In terms of biological role, serine protease that has amidolytic activity, cleaving its substrates before Arg residues. This chain is Serine protease 33 (Prss33), found in Mus musculus (Mouse).